The following is a 218-amino-acid chain: NAD(P)H-hydrate epimerase (218 aa).

One can recognise a YjeF N-terminal domain in the interval 9 to 215; sequence MKKIDQYAID…DIGIPQKAIR (207 aa). Residue 55–59 coordinates (6S)-NADPHX; that stretch reads NNGAD. K(+) contacts are provided by N56 and D127. (6S)-NADPHX-binding positions include 131–137 and D160; that span reads GTGLNRT. Residue S163 participates in K(+) binding.

Belongs to the NnrE/AIBP family. It depends on K(+) as a cofactor.

The enzyme catalyses (6R)-NADHX = (6S)-NADHX. It catalyses the reaction (6R)-NADPHX = (6S)-NADPHX. Catalyzes the epimerization of the S- and R-forms of NAD(P)HX, a damaged form of NAD(P)H that is a result of enzymatic or heat-dependent hydration. This is a prerequisite for the S-specific NAD(P)H-hydrate dehydratase to allow the repair of both epimers of NAD(P)HX. This chain is NAD(P)H-hydrate epimerase, found in Anaerococcus prevotii (strain ATCC 9321 / DSM 20548 / JCM 6508 / NCTC 11806 / PC1) (Peptostreptococcus prevotii).